A 497-amino-acid polypeptide reads, in one-letter code: Serine/threonine-protein phosphatase 2A 56 kDa regulatory subunit beta isoform (497 aa).

Positions M1–L19 are enriched in low complexity. 2 disordered regions span residues M1–N55 and Q473–S497. Phosphoserine occurs at positions 32, 35, 44, 46, 47, and 48. Over residues R34–H45 the composition is skewed to basic residues.

It belongs to the phosphatase 2A regulatory subunit B56 family. As to quaternary structure, component of the serine/threonine-protein phosphatase 2A complex (PP2A). This complex consists of a common heterodimeric core enzyme, composed of a 36 kDa catalytic subunit (subunit C) and a 65 kDa constant scaffold subunit (PR65 or subunit A), that associates with a variety of regulatory subunits. Proteins that associate with the core dimer include three families of regulatory subunits B (the R2/B/PR55/B55, R3/B''/PR72/PR130/PR59 and R5/B'/B56 families), the 48 kDa variable regulatory subunit, viral proteins, and cell signaling molecules. Interacts with SGO1. Interacts with AKT1. Ubiquitinated by CUL3-KLHL15 complex; this modification leads to proteasomal degradation.

It localises to the cytoplasm. Functionally, as the regulatory component of the serine/threonine-protein phosphatase 2A (PP2A) holoenzyme, modulates substrate specificity, subcellular localization, and responsiveness to phosphorylation. The phosphorylated form mediates the interaction between PP2A and AKT1, leading to AKT1 dephosphorylation. In Mus musculus (Mouse), this protein is Serine/threonine-protein phosphatase 2A 56 kDa regulatory subunit beta isoform (Ppp2r5b).